Reading from the N-terminus, the 1240-residue chain is RNA2 polyprotein (1240 aa).

Over residues 1193–1210 (VGTTVPPTADASTSNSQG) the composition is skewed to polar residues. A disordered region spans residues 1193–1240 (VGTTVPPTADASTSNSQGGDEDIGDQYSAALGRGRGRGSRPGPSPIRG).

This sequence belongs to the nepoviruses RNA2 polyprotein family. In terms of processing, specific enzymatic cleavages in vivo by the P1 encoded 3C-like protease yield mature proteins.

The protein localises to the host cell junction. The protein resides in the host plasmodesma. It is found in the virion. Implicated in RNA2 replication. Could also be required for nematode transmission of the virus. Its function is as follows. Transports viral genome to neighboring plant cells directly through plasmosdesmata, without any budding. The movement protein allows efficient cell to cell propagation, by bypassing the host cell wall barrier. Acts by forming a tubular structure at the host plasmodesmata, enlarging it enough to allow free passage of virion capsids. In Cycas necrotic stunt virus (CNSV), this protein is RNA2 polyprotein.